The primary structure comprises 86 residues: MKNLIAELLVKLAQKEEEAKELTVQVEALEIVVTALLRHMEHDAQQALIQDIEQAIDQVTPCPPVNDQDAMLLQQYLKKLLRHPRS.

Residues 1–38 (MKNLIAELLVKLAQKEEEAKELTVQVEALEIVVTALLR) are a coiled coil.

It belongs to the IraP family. In terms of assembly, interacts with RssB.

It localises to the cytoplasm. Inhibits RpoS proteolysis by regulating RssB activity, thereby increasing the stability of the sigma stress factor RpoS especially during phosphate starvation, but also in stationary phase and during nitrogen starvation. Its effect on RpoS stability is due to its interaction with RssB, which probably blocks the interaction of RssB with RpoS, and the consequent delivery of the RssB-RpoS complex to the ClpXP protein degradation pathway. This chain is Anti-adapter protein IraP, found in Klebsiella pneumoniae (strain 342).